A 446-amino-acid chain; its full sequence is Sphingomyelinase phosphodiesterase C (446 aa).

The first 26 residues, 1–26 (MKFRNNLTLYLIFIIVFTIYISLTIS), serve as a signal peptide directing secretion. Residue asparagine 6 is glycosylated (N-linked (GlcNAc...) asparagine). Aspartate 39 and histidine 41 together coordinate Zn(2+). Cysteine 56 and cysteine 78 are oxidised to a cystine. Position 107 (aspartate 107) interacts with Zn(2+). N-linked (GlcNAc...) asparagine glycosylation is found at asparagine 118 and asparagine 128. Asparagine 148 serves as a coordination point for Zn(2+). Asparagine 178, asparagine 217, asparagine 229, and asparagine 234 each carry an N-linked (GlcNAc...) asparagine glycan. 3 residues coordinate Zn(2+): histidine 247, histidine 287, and histidine 289. N-linked (GlcNAc...) asparagine glycosylation is found at asparagine 342 and asparagine 357. The cysteines at positions 429 and 442 are disulfide-linked.

This sequence belongs to the acid sphingomyelinase family. Zn(2+) serves as cofactor.

The protein localises to the secreted. This is Sphingomyelinase phosphodiesterase C (sgmC) from Dictyostelium discoideum (Social amoeba).